The primary structure comprises 155 residues: Small ribosomal subunit protein uS7 (155 aa).

Belongs to the universal ribosomal protein uS7 family. As to quaternary structure, part of the 30S ribosomal subunit. Contacts proteins S9 and S11.

In terms of biological role, one of the primary rRNA binding proteins, it binds directly to 16S rRNA where it nucleates assembly of the head domain of the 30S subunit. Is located at the subunit interface close to the decoding center, probably blocks exit of the E-site tRNA. The polypeptide is Small ribosomal subunit protein uS7 (Pseudothermotoga lettingae (strain ATCC BAA-301 / DSM 14385 / NBRC 107922 / TMO) (Thermotoga lettingae)).